A 190-amino-acid polypeptide reads, in one-letter code: MVVEAYVKQTEALEKKNRIVELMLEREHASSVKSVLETLNGLPGVRMWSPFHKTSIDHLIADEASRQGFIAFPRAEHKRTGEEDLIWDPNAVDDFCRGDMHKWLEEMPNYCYYNCAGEGIGFARQRMALFIYALQRAYLPFEMKKVVVQTREDIESSMKLKASNAIFYMNFKAYGGPQCRGIVRKQVIED.

It belongs to the UPF0725 (EMB2204) family.

The polypeptide is UPF0725 protein At2g20625 (Arabidopsis thaliana (Mouse-ear cress)).